The primary structure comprises 130 residues: Small ribosomal subunit protein uS11 (130 aa).

The protein belongs to the universal ribosomal protein uS11 family. In terms of assembly, part of the 30S ribosomal subunit. Interacts with proteins S7 and S18. Binds to IF-3.

In terms of biological role, located on the platform of the 30S subunit, it bridges several disparate RNA helices of the 16S rRNA. Forms part of the Shine-Dalgarno cleft in the 70S ribosome. The protein is Small ribosomal subunit protein uS11 of Xylella fastidiosa (strain 9a5c).